The chain runs to 682 residues: Methionine--tRNA ligase (682 aa).

The 'HIGH' region signature appears at 15–25; it reads PYANGAIHLGH. 4 residues coordinate Zn(2+): cysteine 146, cysteine 149, cysteine 159, and cysteine 162. Positions 331 to 335 match the 'KMSKS' region motif; that stretch reads KMSKS. Lysine 334 serves as a coordination point for ATP. Positions 580-682 constitute a tRNA-binding domain; that stretch reads DFAKLDMRVA…SGVTAGMQVK (103 aa).

It belongs to the class-I aminoacyl-tRNA synthetase family. MetG type 1 subfamily. Homodimer. The cofactor is Zn(2+).

Its subcellular location is the cytoplasm. It catalyses the reaction tRNA(Met) + L-methionine + ATP = L-methionyl-tRNA(Met) + AMP + diphosphate. Is required not only for elongation of protein synthesis but also for the initiation of all mRNA translation through initiator tRNA(fMet) aminoacylation. This is Methionine--tRNA ligase from Haemophilus influenzae (strain ATCC 51907 / DSM 11121 / KW20 / Rd).